Consider the following 299-residue polypeptide: Porphobilinogen deaminase (299 aa).

Position 234 is an S-(dipyrrolylmethanemethyl)cysteine (Cys234).

Belongs to the HMBS family. Monomer. Dipyrromethane is required as a cofactor.

The catalysed reaction is 4 porphobilinogen + H2O = hydroxymethylbilane + 4 NH4(+). It participates in porphyrin-containing compound metabolism; protoporphyrin-IX biosynthesis; coproporphyrinogen-III from 5-aminolevulinate: step 2/4. Its function is as follows. Tetrapolymerization of the monopyrrole PBG into the hydroxymethylbilane pre-uroporphyrinogen in several discrete steps. This chain is Porphobilinogen deaminase, found in Corynebacterium efficiens (strain DSM 44549 / YS-314 / AJ 12310 / JCM 11189 / NBRC 100395).